The primary structure comprises 105 residues: Heme oxygenase (mycobilin-producing) (105 aa).

One can recognise an ABM domain in the interval 3 to 92 (VVKINAIEVP…VATGASLLEF (90 aa)). Heme contacts are provided by residues 22–26 (RFAHR), H75, and 83–86 (VATG).

It belongs to the antibiotic biosynthesis monooxygenase family. Homodimer.

The enzyme catalyses heme b + 3 AH2 + 3 O2 + 2 H(+) = mycobilin a + Fe(2+) + 3 A + 3 H2O. The catalysed reaction is heme b + 3 AH2 + 3 O2 + 2 H(+) = mycobilin b + Fe(2+) + 3 A + 3 H2O. Functionally, catalyzes the oxidative degradation of the heme macrocyclic porphyrin ring in the presence of a suitable electron donor such as ascorbate or NADPH--cytochrome P450 reductase, with subsequent release of free iron. In Mycobacterium tuberculosis (strain CDC 1551 / Oshkosh), this protein is Heme oxygenase (mycobilin-producing) (mhuD).